The following is a 372-amino-acid chain: N-methyl-L-tryptophan oxidase (372 aa).

4-34 (DLIIIGSGSVGAAAGYYATRAGLNVLMTDAH) serves as a coordination point for FAD. At C308 the chain carries S-8alpha-FAD cysteine.

This sequence belongs to the MSOX/MTOX family. MTOX subfamily. Monomer. FAD serves as cofactor.

The enzyme catalyses N(alpha)-methyl-L-tryptophan + O2 + H2O = L-tryptophan + formaldehyde + H2O2. Its function is as follows. Catalyzes the oxidative demethylation of N-methyl-L-tryptophan. This is N-methyl-L-tryptophan oxidase from Escherichia coli O81 (strain ED1a).